The sequence spans 173 residues: Putative phosphoesterase GWCH70_0799 (173 aa).

Histidine 34 acts as the Proton donor in catalysis. Short sequence motifs (HXTX) lie at residues 34–37 and 115–118; these read HLTL and HITI. Histidine 115 serves as the catalytic Proton acceptor.

This sequence belongs to the 2H phosphoesterase superfamily. YjcG family.

The chain is Putative phosphoesterase GWCH70_0799 from Geobacillus sp. (strain WCH70).